The following is a 519-amino-acid chain: Ribonuclease Y (519 aa).

The chain crosses the membrane as a helical span at residues 3–23; sequence LIEIVLLLVGMAVGAATGFIL. Residues 209–272 form the KH domain; it reads TVTAVSLPSE…QIAKMALERL (64 aa). Positions 335–428 constitute an HD domain; sequence VLQHSMEVAS…VQAADSLSGA (94 aa).

The protein belongs to the RNase Y family.

The protein resides in the cell membrane. Functionally, endoribonuclease that initiates mRNA decay. This is Ribonuclease Y from Oleidesulfovibrio alaskensis (strain ATCC BAA-1058 / DSM 17464 / G20) (Desulfovibrio alaskensis).